We begin with the raw amino-acid sequence, 996 residues long: Phototropin-1 (996 aa).

Positions 1-184 (MEPTEKPSTK…PGGRSGIPRV (184 aa)) are disordered. 2 positions are modified to phosphoserine: S23 and S58. Residues 49–59 (QNLSDPRGTSP) are compositionally biased toward polar residues. Residues 60–70 (QPRPQQEPAPS) are compositionally biased toward pro residues. A compositionally biased stretch (polar residues) spans 141 to 153 (SGGTENDPNGKKT). Low complexity predominate over residues 155-166 (SQRNSQNSCRSS). The region spanning 184–257 (VSEDLKDALS…AKIRETLAAG (74 aa)) is the PAS 1 domain. A Phosphoserine modification is found at S185. Position 233 (N233) interacts with FMN. C234 carries the S-4a-FMN cysteine modification. 7 residues coordinate FMN: R235, Q238, R251, N266, N276, Q297, and K302. Positions 258–312 (NNYCGRILNYKKDGTSFWNLLTIAPIKDESGKVLKFIGMQVEVSKHTEGAKEKAL) constitute a PAC 1 domain. 3 positions are modified to phosphoserine: S350, S376, and S410. 2 disordered regions span residues 351-413 (ESTN…SLSF) and 434-453 (YGEEDDEISDRDERPESVDD). A compositionally biased stretch (acidic residues) spans 434 to 443 (YGEEDDEISD). Residues 444–453 (RDERPESVDD) show a composition bias toward basic and acidic residues. The residue at position 450 (S450) is a Phosphoserine. Residues 462-535 (KGIDLATTLE…KKIRNAIDNQ (74 aa)) form the PAS 2 domain. An FMN-binding site is contributed by N511. S-4a-FMN cysteine is present on C512. FMN contacts are provided by R513, Q516, R529, N544, N554, F556, and Q575. In terms of domain architecture, PAC 2 spans 536 to 590 (TEVTVQLINYTKSGKKFWNIFHLQPMRDQKGEVQYFIGVQLDGSKHVEPVRNVIE). Positions 663 to 952 (FKPVKPLGSG…ANEVKQHSFF (290 aa)) constitute a Protein kinase domain. ATP contacts are provided by residues 669–677 (LGSGDTGSV) and K692. D788 acts as the Proton acceptor in catalysis. Residues 806 to 862 (DFDLSCLTSCKPQLLIPSIDEKKKKKQQKSQQTPIFMAEPMRASNSFVGTEEYIAPE) form an activation loop region.

It belongs to the protein kinase superfamily. AGC Ser/Thr protein kinase family. As to quaternary structure, homodimer; disulfide-linked. Interacts with PKS1, PKS2, RPT2, RPT3, PHOT2 and BLUS1. Subunit of a complex made of CAR6, PHOT1 and RPT3/NPH3. Associates with CBC1 and CBC2. Binds to BHP. FMN serves as cofactor. In terms of processing, autophosphorylated at Ser-185, Ser-350 and Ser-410 in response to blue light irradiation. 2 molecules of FMN bind covalently to cysteines after exposure to blue light and are reversed in the dark. Present in guard cells (at protein level).

The protein resides in the cell membrane. It is found in the cytoplasm. The enzyme catalyses L-seryl-[protein] + ATP = O-phospho-L-seryl-[protein] + ADP + H(+). The catalysed reaction is L-threonyl-[protein] + ATP = O-phospho-L-threonyl-[protein] + ADP + H(+). Its activity is regulated as follows. Autophosphorylation is inhibited by staurosporine, but not by tyrphostin 9, sphingosine, GW5074 and BML-265. Protein kinase that acts as a blue light (BL) photoreceptor in a signal-transduction pathway for photo-induced movements. Triggers the phosphorylation of AHA1 and AHA2 C-terminal penultimate Thr in guard cells to activate them and induce stomatal opening in response to blue light (BL). Also phosphorylates BLUS1, a kinase involved in stomatal opening. Mediates the phosphorylation of CBC1 in stomata, but not of CBC2, in response to blue light. Required for blue light mediated mRNA destabilization. Mediates calcium spiking of extracellular origin in response to a low rate of blue light. Also mediates rapid membrane depolarization and growth inhibition in response to blue light. Necessary for root phototropism. Involved in hypocotyl phototropism under a low rate but not under a high rate of blue light. Contributes to the chloroplast accumulation but seems not to be required for chloroplast translocation. Regulates stomata opening and photomorphogenesis response of leaf tissue. Confers sensitivity to drought. Not involved in hypocotyl elongation inhibition, anthocyanin accumulation or cotyledon opening. Involved in the regulation of leaf position and morphology via the phosphorylation of ABCB19 during blue light responses to modulate auxin distribution. The protein is Phototropin-1 of Arabidopsis thaliana (Mouse-ear cress).